A 230-amino-acid polypeptide reads, in one-letter code: MGQKVHPNGIRLGITKPWISTWYADKSDYANNLNSDWEVRKFLVEKLQAASVSKIVIERPAKSIRVTIHTARPGVVIGKKGEDVEVLRAAVSKLAGTPAQINIAEIRKPELDAKLVADSIAQQLERRVMFRRAMKRAVQNAMRIGAQGIKVQVSGRLGGAEIARDEWYREGRVPLHTLRADIDYSTSESHTQYGVIGVKVWIFKGEVLDGMLPQIEEPKQQQPKRKPRGK.

A KH type-2 domain is found at 39–107; sequence VRKFLVEKLQ…PAQINIAEIR (69 aa).

The protein belongs to the universal ribosomal protein uS3 family. Part of the 30S ribosomal subunit. Forms a tight complex with proteins S10 and S14.

Its function is as follows. Binds the lower part of the 30S subunit head. Binds mRNA in the 70S ribosome, positioning it for translation. In Shewanella putrefaciens (strain CN-32 / ATCC BAA-453), this protein is Small ribosomal subunit protein uS3.